Reading from the N-terminus, the 173-residue chain is Ribosome maturation factor RimM (173 aa).

Positions 97 to 171 (EGEFFYHEII…QITIEPMEGL (75 aa)) constitute a PRC barrel domain.

The protein belongs to the RimM family. As to quaternary structure, binds ribosomal protein uS19.

The protein resides in the cytoplasm. Its function is as follows. An accessory protein needed during the final step in the assembly of 30S ribosomal subunit, possibly for assembly of the head region. Essential for efficient processing of 16S rRNA. May be needed both before and after RbfA during the maturation of 16S rRNA. It has affinity for free ribosomal 30S subunits but not for 70S ribosomes. This Halalkalibacterium halodurans (strain ATCC BAA-125 / DSM 18197 / FERM 7344 / JCM 9153 / C-125) (Bacillus halodurans) protein is Ribosome maturation factor RimM.